The chain runs to 108 residues: Circadian clock oscillator protein KaiB (108 aa).

Belongs to the KaiB family. Undergoes a major conformational rearrangment; in the free state forms homotetramers with 2 dimers. When bound to the CI domain of KaiC, KaiA or CikA switches to a monomeric thioredoxin-fold (KaiB(fs)). The KaiABC complex composition changes during the circadian cycle to control KaiC phosphorylation. Complexes KaiC(6), KaiA(2-4):KaiC(6), KaiB(6):KaiC(6) and KaiC(6):KaiB(6):KaiA(12) are among the most important forms, many form cooperatively. Binds to KaiA; 1 KaiB(fs) binds to the KaiA homodimer. Binds to the B-loop in the CI domain of KaiC; SasA and KaiB compete to bind to the CI domain. Binding to KaiC CI domain occurs 1:1. KaiA and CikA bind to the same region of KaiB(fs) and therefore compete.

In terms of biological role, key component of the KaiABC oscillator complex, which constitutes the main circadian regulator in cyanobacteria. Its composition changes during the circadian cycle to control KaiC phosphorylation. KaiA stimulates KaiC autophosphorylation, while KaiB sequesters KaiA, leading to KaiC autodephosphorylation. KaiA binding to KaiC yields KaiA(2-4):KaiC(6) complexes which stimulate KaiC autophosphorylation. Phospho-Ser-431 KaiC accumulation triggers binding of KaiB to form the KaiB(6):KaiC(6) complex, leading to changes in the output regulators CikA and SasA. KaiB switches to a thioredoxin-like fold (KaiB(fs)) in complex with KaiC. KaiB(6):KaiC(6) formation exposes a site for KaiA binding that sequesters KaiA from the CII domain, making the KaiC(6):KaiB(6):KaiA(12) complex that results in KaiC autodephosphorylation. Complete dephosphorylation of KaiC leads to dissociation of KaiA(2):KaiB(1), completing 1 cycle of the Kai oscillator. Its function is as follows. A metamorphic protein which reversibly switches between an inactive tetrameric fold and a rare, thioredoxin-like monomeric fold (KaiB(fs)). KaiB(fs) binds phospho-KaiC, KaiA and CikA. KaiA and CikA compete for binding to KaiB(fs), and KaiB(fs) and SasA compete for binding to KaiC, thus the clock oscillator and output signal pathway are tightly coupled. The chain is Circadian clock oscillator protein KaiB from Thermosynechococcus vestitus (strain NIES-2133 / IAM M-273 / BP-1).